A 343-amino-acid chain; its full sequence is 2-deoxy-scyllo-inosamine dehydrogenase (343 aa).

Residues Cys37, His59, Cys91, Cys94, Cys97, Cys105, and Glu146 each contribute to the Zn(2+) site.

The protein belongs to the zinc-containing alcohol dehydrogenase family. DOIA dehydrogenase subfamily. The cofactor is Zn(2+).

It catalyses the reaction 2-deoxy-scyllo-inosamine + NADP(+) = 3-amino-2,3-dideoxy-scyllo-inosose + NADPH + H(+). The catalysed reaction is 2-deoxy-scyllo-inosamine + NAD(+) = 3-amino-2,3-dideoxy-scyllo-inosose + NADH + H(+). Its pathway is metabolic intermediate biosynthesis; 2-deoxystreptamine biosynthesis; 2-deoxystreptamine from D-glucose 6-phosphate: step 3/4. It participates in antibiotic biosynthesis; kanamycin biosynthesis. In terms of biological role, catalyzes the oxidation of 2-deoxy-scyllo-inosamine (DOIA) with NAD(+) or NADP(+), forming 3-amino-2,3-dideoxy-scyllo-inosose (amino-DOI). The protein is 2-deoxy-scyllo-inosamine dehydrogenase (kanE) of Streptomyces kanamyceticus.